We begin with the raw amino-acid sequence, 490 residues long: V-type proton ATPase subunit B (490 aa).

Arg380 provides a ligand contact to ATP.

Belongs to the ATPase alpha/beta chains family. As to quaternary structure, V-ATPase is a heteromultimeric enzyme made up of two complexes: the ATP-hydrolytic V1 complex and the proton translocation V0 complex. The V1 complex consists of three catalytic AB heterodimers that form a heterohexamer, three peripheral stalks each consisting of EG heterodimers, one central rotor including subunits D and F, and the regulatory subunits C and H. The proton translocation complex V0 consists of the proton transport subunit a, a ring of proteolipid subunits c9c'', rotary subunit d, subunits e and f, and the accessory subunits VhaAC45 and ATP6AP2. Expressed in Malpighian tubules, rectum, antennal palps and oviduct.

Its function is as follows. Non-catalytic subunit of the V1 complex of vacuolar(H+)-ATPase (V-ATPase), a multisubunit enzyme composed of a peripheral complex (V1) that hydrolyzes ATP and a membrane integral complex (V0) that translocates protons. V-ATPase is responsible for acidifying and maintaining the pH of intracellular compartments and in some cell types, is targeted to the plasma membrane, where it is responsible for acidifying the extracellular environment. Essential for the proper assembly and activity of V-ATPase. The sequence is that of V-type proton ATPase subunit B (Vha55) from Drosophila melanogaster (Fruit fly).